The chain runs to 261 residues: NAD-capped RNA hydrolase NudC (261 aa).

R69 contacts substrate. Positions 98 and 101 each coordinate Zn(2+). E111 is a substrate binding site. Positions 116 and 119 each coordinate Zn(2+). Y124 provides a ligand contact to substrate. Residues 125 to 248 (PQIAPCIIVA…TVARRLIEDT (124 aa)) form the Nudix hydrolase domain. A158, E174, and E178 together coordinate a divalent metal cation. Residues 159-180 (GFVEVGETLEQTVAREVMEESS) carry the Nudix box motif. 192-199 (QPWPFPQS) is a substrate binding site. E219 contacts a divalent metal cation. A241 contacts substrate.

This sequence belongs to the Nudix hydrolase family. NudC subfamily. In terms of assembly, homodimer. Mg(2+) is required as a cofactor. It depends on Mn(2+) as a cofactor. Requires Zn(2+) as cofactor.

The catalysed reaction is a 5'-end NAD(+)-phospho-ribonucleoside in mRNA + H2O = a 5'-end phospho-adenosine-phospho-ribonucleoside in mRNA + beta-nicotinamide D-ribonucleotide + 2 H(+). It catalyses the reaction NAD(+) + H2O = beta-nicotinamide D-ribonucleotide + AMP + 2 H(+). It carries out the reaction NADH + H2O = reduced beta-nicotinamide D-ribonucleotide + AMP + 2 H(+). In terms of biological role, mRNA decapping enzyme that specifically removes the nicotinamide adenine dinucleotide (NAD) cap from a subset of mRNAs by hydrolyzing the diphosphate linkage to produce nicotinamide mononucleotide (NMN) and 5' monophosphate mRNA. The NAD-cap is present at the 5'-end of some mRNAs and stabilizes RNA against 5'-processing. Has preference for mRNAs with a 5'-end purine. Catalyzes the hydrolysis of a broad range of dinucleotide pyrophosphates. The sequence is that of NAD-capped RNA hydrolase NudC from Erwinia tasmaniensis (strain DSM 17950 / CFBP 7177 / CIP 109463 / NCPPB 4357 / Et1/99).